We begin with the raw amino-acid sequence, 352 residues long: Protein NDRG4 (352 aa).

Residues Ser-298, Ser-317, and Ser-323 each carry the phosphoserine modification. Positions 301–352 (AVPSASMTRLARSRTASLTSASSVDGSRPQPCTHSDSSEGMGQVNHTMEVSC) are disordered. Positions 308–323 (TRLARSRTASLTSASS) are enriched in low complexity. The span at 330-352 (QPCTHSDSSEGMGQVNHTMEVSC) shows a compositional bias: polar residues.

Belongs to the NDRG family. As to expression, expressed in the brain and heart, weakly in the kidney; most prominently in postnatal brain where it is expressed widely in the olfactory bulb, cerebral cortex, hippocampus, cerebellum, thalamus, and medulla oblongata.

Its subcellular location is the cytoplasm. It localises to the cytosol. In terms of biological role, contributes to the maintenance of intracerebral BDNF levels within the normal range, which is necessary for the preservation of spatial learning and the resistance to neuronal cell death caused by ischemic stress. May enhance growth factor-induced ERK1 and ERK2 phosphorylation, including that induced by NGF. May attenuate NGF-promoted ELK1 phosphorylation in a microtubule-dependent manner. This is Protein NDRG4 (Ndrg4) from Rattus norvegicus (Rat).